Reading from the N-terminus, the 474-residue chain is tRNA-2-methylthio-N(6)-dimethylallyladenosine synthase (474 aa).

The MTTase N-terminal domain maps to 3–120 (KKLHIKTWGC…LPEMINSVRG (118 aa)). Residues Cys12, Cys49, Cys83, Cys157, Cys161, and Cys164 each contribute to the [4Fe-4S] cluster site. One can recognise a Radical SAM core domain in the interval 143 to 378 (RADGPSAFVS…INQQVTAWSR (236 aa)). One can recognise a TRAM domain in the interval 378–441 (RRMLGTTQRI…TNSMRGKVVR (64 aa)).

This sequence belongs to the methylthiotransferase family. MiaB subfamily. Monomer. It depends on [4Fe-4S] cluster as a cofactor.

It is found in the cytoplasm. It carries out the reaction N(6)-dimethylallyladenosine(37) in tRNA + (sulfur carrier)-SH + AH2 + 2 S-adenosyl-L-methionine = 2-methylsulfanyl-N(6)-dimethylallyladenosine(37) in tRNA + (sulfur carrier)-H + 5'-deoxyadenosine + L-methionine + A + S-adenosyl-L-homocysteine + 2 H(+). Functionally, catalyzes the methylthiolation of N6-(dimethylallyl)adenosine (i(6)A), leading to the formation of 2-methylthio-N6-(dimethylallyl)adenosine (ms(2)i(6)A) at position 37 in tRNAs that read codons beginning with uridine. In Enterobacter sp. (strain 638), this protein is tRNA-2-methylthio-N(6)-dimethylallyladenosine synthase.